We begin with the raw amino-acid sequence, 441 residues long: Glutamyl-tRNA reductase (441 aa).

Substrate contacts are provided by residues 47–50 (TCNR), S104, 109–111 (EAQ), and Q115. C48 acts as the Nucleophile in catalysis. 184 to 189 (GAGEMG) is a binding site for NADP(+).

This sequence belongs to the glutamyl-tRNA reductase family. Homodimer.

It catalyses the reaction (S)-4-amino-5-oxopentanoate + tRNA(Glu) + NADP(+) = L-glutamyl-tRNA(Glu) + NADPH + H(+). The protein operates within porphyrin-containing compound metabolism; protoporphyrin-IX biosynthesis; 5-aminolevulinate from L-glutamyl-tRNA(Glu): step 1/2. Functionally, catalyzes the NADPH-dependent reduction of glutamyl-tRNA(Glu) to glutamate 1-semialdehyde (GSA). The polypeptide is Glutamyl-tRNA reductase (Myxococcus xanthus (strain DK1622)).